A 143-amino-acid chain; its full sequence is Ribonuclease H (143 aa).

Residues 1-140 enclose the RNase H type-1 domain; the sequence is MKVEIYTDGA…VDALANLGIE (140 aa). 4 residues coordinate Mg(2+): Asp8, Glu46, Asp68, and Asp132.

This sequence belongs to the RNase H family. Monomer. It depends on Mg(2+) as a cofactor.

It is found in the cytoplasm. The catalysed reaction is Endonucleolytic cleavage to 5'-phosphomonoester.. In terms of biological role, endonuclease that specifically degrades the RNA of RNA-DNA hybrids. The polypeptide is Ribonuclease H (Legionella pneumophila (strain Lens)).